A 103-amino-acid polypeptide reads, in one-letter code: Large ribosomal subunit protein eL21 (103 aa).

The protein belongs to the eukaryotic ribosomal protein eL21 family.

This Sulfurisphaera tokodaii (strain DSM 16993 / JCM 10545 / NBRC 100140 / 7) (Sulfolobus tokodaii) protein is Large ribosomal subunit protein eL21.